The primary structure comprises 485 residues: Dual specificity protein phosphatase CDC14B (485 aa).

The segment at 1 to 38 (MKRKSERRSAWATAPPCSRRSSSSSPGVKKSRSSTPQE) is disordered. A Nucleolar localization signal motif is present at residues 1-54 (MKRKSERRSAWATAPPCSRRSSSSSPGVKKSRSSTPQELHRLEQQDDLYLDITD). The segment covering 15-28 (PPCSRRSSSSSPGV) has biased composition (low complexity). The segment at 44-198 (QQDDLYLDIT…AMQYGFFNFN (155 aa)) is a. The segment at 199 to 212 (SFNLDEYEHYEKAE) is linker. The interval 213–379 (NGDFNWIIPE…EGDYFRQKLR (167 aa)) is b. Residues 215–374 (DFNWIIPERF…SSLWLEGDYF (160 aa)) form the Tyrosine-protein phosphatase domain. The active-site Phosphocysteine intermediate is Cys314. Positions 402–424 (LNGLENQDNQEPEPYSDDDEVSG) are disordered. Over residues 409 to 422 (DNQEPEPYSDDDEV) the composition is skewed to acidic residues.

It belongs to the protein-tyrosine phosphatase family. Non-receptor class CDC14 subfamily. In terms of assembly, interacts with FZR1/CDH1.

It localises to the nucleus. The protein resides in the nucleolus. Its subcellular location is the nucleoplasm. The enzyme catalyses O-phospho-L-tyrosyl-[protein] + H2O = L-tyrosyl-[protein] + phosphate. It carries out the reaction O-phospho-L-seryl-[protein] + H2O = L-seryl-[protein] + phosphate. It catalyses the reaction O-phospho-L-threonyl-[protein] + H2O = L-threonyl-[protein] + phosphate. In terms of biological role, dual-specificity phosphatase involved in DNA damage response. Essential regulator of the G2 DNA damage checkpoint: following DNA damage, translocates to the nucleus and dephosphorylates FZR1/CDH1, a key activator of the anaphase promoting complex/cyclosome (APC/C). Dephosphorylates SIRT2 around early anaphase. Dephosphorylation of FZR1/CDH1 activates the APC/C, leading to the ubiquitination of PLK1, preventing entry into mitosis. Preferentially dephosphorylates proteins modified by proline-directed kinases. The polypeptide is Dual specificity protein phosphatase CDC14B (Cdc14b) (Mus musculus (Mouse)).